The primary structure comprises 379 residues: MPDINELLRWSIANSTAPDTDASEQLQIRFNPNSTQSGTSTLHASDSGPPDISPASTPGPVTPDDGSSLPLPPGTEVPVTKKEDLTTEMLDLILGKGDSITMKEKMAFATDENNSVEDRVEALDDFEMLIELIDNANNMPILKLWDPLLTLLSSSHPEIVAHTCWIIGTAIQNNIKAQAAFYIHETFSRILEIIYPPSSISSYPPSVRAKATYALSAALKHWPLASYALYTATSSAENGYSVLRRGVNDPQAIVRRKMAFLVGTLAMQSGERYEGEIPSEVRNYIEENEKNAPSESLVEGLKREGVFTALVDGLKQGVDDVEYEENAMRALVRAHQKGGLTVSEKSDLKTIWEKWGKQGRQERGLDGEDGKEVSETLSS.

3 ARM repeats span residues 25-114 (QLQI…DENN), 133-172 (IDNA…TAIQ), and 175-220 (IKAQ…AALK). A compositionally biased stretch (polar residues) spans 29–44 (RFNPNSTQSGTSTLHA). Residues 29–80 (RFNPNSTQSGTSTLHASDSGPPDISPASTPGPVTPDDGSSLPLPPGTEVPVT) are disordered. Positions 359–379 (GRQERGLDGEDGKEVSETLSS) are disordered.

Belongs to the FES1 family.

It localises to the cytoplasm. Functionally, functions as a nucleotide exchange factor (NEF) for Hsp70 chaperones which accelerates the release of ADP. Required for fully efficient Hsp70-mediated folding of proteins. The sequence is that of Hsp70 nucleotide exchange factor FES1 (FES1) from Cryptococcus neoformans var. neoformans serotype D (strain B-3501A) (Filobasidiella neoformans).